We begin with the raw amino-acid sequence, 377 residues long: Spore coat protein SA (377 aa).

It belongs to the glycosyltransferase group 1 family. Glycosyltransferase 4 subfamily.

The sequence is that of Spore coat protein SA (cotSA) from Bacillus subtilis (strain 168).